Consider the following 137-residue polypeptide: Putative pre-16S rRNA nuclease (137 aa).

This sequence belongs to the YqgF nuclease family.

Its subcellular location is the cytoplasm. In terms of biological role, could be a nuclease involved in processing of the 5'-end of pre-16S rRNA. The protein is Putative pre-16S rRNA nuclease of Clostridium botulinum (strain Eklund 17B / Type B).